A 516-amino-acid polypeptide reads, in one-letter code: Multicopper oxidase CueO (516 aa).

Residues 1 to 28 (MQRRDFLKYSVALGVASALPLWSRAVFA) constitute a signal peptide (tat-type signal). 2 Plastocyanin-like domains span residues 55-165 (GQST…IEDD) and 227-292 (PRGW…DNKP). His101, His103, His141, and His143 together coordinate Cu cation. Positions 355 to 400 (MDPMLDMMGMQMLMEKYGDQAMAGMDHSQMMGHMGHGNMNHMNHGG) are methionine-rich region. The region spanning 402-516 (FDFHHANKIN…DTGMMLGFTV (115 aa)) is the Plastocyanin-like 3 domain. Cu cation is bound by residues His443, His446, His448, His499, Cys500, His501, and His505.

The protein belongs to the multicopper oxidase family. Monomer. The cofactor is Cu cation. Post-translationally, exported by the Tat system. The position of the signal peptide cleavage has been experimentally proven.

The protein localises to the periplasm. It carries out the reaction 4 Cu(+) + O2 + 4 H(+) = 4 Cu(2+) + 2 H2O. With respect to regulation, ferroxidase and phenoloxidase activities are enhanced considerably in the presence of excess copper ions. A labile regulatory copper ion near the T1 copper site is important for the copper associated activation of enzyme activity. Ag(+) acts as a potent inhibitor of oxidase activity by binding at Cu(+) binding sites, blocking Cu(+) substrate binding and oxidation. pPD oxidase activity is strongly inhibited by sodium azide, an inhibitor of the electron transfer. Its function is as follows. Multicopper oxidase involved in copper homeostasis and copper tolerance under aerobic conditions. Is responsible for the oxidation of Cu(+) to the less harmful Cu(2+) in the periplasm, thereby preventing Cu(+) from entering the cytoplasm. Probably primarily functions as a cuprous oxidase in vivo. In terms of biological role, in vitro, in the presence of excess copper ions, exhibits ferroxidase and phenoloxidase activities. Fe(2+) is an excellent substrate in the presence of excess Cu(2+), but is inactive in the absence of Cu(2+). Oxidizes the phenolate iron siderophores enterobactin, 2,3-dihydroxybenzoate (2,3-DHB) and 3-hydroxyanthranilate (3-HAA). Oxidation and thus inactivation of enterobactin could protect cells from the interaction of enterobactin with copper and play a central role as an interface between copper detoxification and iron homeostasis. Also oxidizes a variety of phenolic model substrates, including 2,2'-azinobis(3-ethylbenzthiazolinesulfonic acid) (ABTS), p-phenylenediamine (pPD), 2,6-dimethoxyphenol (2,6-DMP) and 3,4-dihydroxybenzoic acid (3,4-DHB). In Escherichia coli (strain K12), this protein is Multicopper oxidase CueO.